The sequence spans 337 residues: Nicotinate-nucleotide--dimethylbenzimidazole phosphoribosyltransferase (337 aa).

E305 (proton acceptor) is an active-site residue.

This sequence belongs to the CobT family.

It carries out the reaction 5,6-dimethylbenzimidazole + nicotinate beta-D-ribonucleotide = alpha-ribazole 5'-phosphate + nicotinate + H(+). Its pathway is nucleoside biosynthesis; alpha-ribazole biosynthesis; alpha-ribazole from 5,6-dimethylbenzimidazole: step 1/2. In terms of biological role, catalyzes the synthesis of alpha-ribazole-5'-phosphate from nicotinate mononucleotide (NAMN) and 5,6-dimethylbenzimidazole (DMB). This is Nicotinate-nucleotide--dimethylbenzimidazole phosphoribosyltransferase from Jannaschia sp. (strain CCS1).